We begin with the raw amino-acid sequence, 192 residues long: uncharacterized protein (192 aa).

Residues 71–100 (NNVLPEPSKPNNPVVNPPVSPIQPKTDPEQ) are disordered. Over residues 77 to 91 (PSKPNNPVVNPPVSP) the composition is skewed to pro residues.

This is an uncharacterized protein from Caenorhabditis elegans.